Consider the following 449-residue polypeptide: Packaging protein 1 (449 aa).

Residues 1–10 (MESRGKHRLK) are compositionally biased toward basic residues. Positions 1–64 (MESRGKHRLK…SSNSILHCPP (64 aa)) are disordered. The segment covering 11 to 25 (KNGESKENLGEHEQA) has biased composition (basic and acidic residues). Residues 35–59 (SADSLSSPVAEPNFSSPGGRSSNSI) show a composition bias toward polar residues. Position 168-175 (168-175 (GPTGSGKS)) interacts with ATP. The interval 437–449 (TAYSKKCDKLANK) is DNA-binding.

This sequence belongs to the adenoviridae packaging protein 1 family. In terms of assembly, homodimer. Part of a genome packaging complex composed of packaging proteins 1, 2 and 3; this complex specifically binds to the packaging sequence on the left end of viral genomic DNA and performs packaging of the viral genome. Interacts with protein 33K.

The protein resides in the virion. Its subcellular location is the host nucleus. It is found in the host nucleoplasm. It localises to the host nucleolus. Its function is as follows. Component of the packaging machinery which encapsidates the viral DNA into preformed capsids and transcriptional activator of the viral major late promoter (MLP). Binds, along with packaging proteins 2 and 3, to the specific packaging sequence on the left end of viral genomic DNA and displays ATPase activity thereby providing the power stroke of the packaging machinery. The activity of packaging protein IVa2 is stimulated by protein 33K which acts as a terminase. May be the protein that pumps DNA into the capsid powered by ATP hydrolysis. Specifically binds to the 5'-CG-3' nucleotides of the repeats making up the packaging sequence. Component of the DEF-A and DEF-B transcription factors that bind downstream elements of the major late promoter (MLP), and stimulate transcription from the MLP after initiation of viral DNA replication. DEF-A is a heterodimer packaging proteins 1 and 2 and DEF-B is a homodimer of packaging protein 1. The polypeptide is Packaging protein 1 (Mus musculus (Mouse)).